Consider the following 833-residue polypeptide: Glycerol-3-phosphate acyltransferase (833 aa).

The HXXXXD motif motif lies at 309–314 (CHRSHI).

The protein belongs to the GPAT/DAPAT family.

The protein resides in the cell inner membrane. It catalyses the reaction sn-glycerol 3-phosphate + an acyl-CoA = a 1-acyl-sn-glycero-3-phosphate + CoA. The protein operates within phospholipid metabolism; CDP-diacylglycerol biosynthesis; CDP-diacylglycerol from sn-glycerol 3-phosphate: step 1/3. This chain is Glycerol-3-phosphate acyltransferase, found in Pseudomonas syringae pv. syringae (strain B728a).